Here is a 211-residue protein sequence, read N- to C-terminus: MLTIALSKGRILDDTLPLLAAAGIVPSENPDKSRKLIIPTSLPDVRLLIVRATDVPTYVEHGAADLGVAGKDVLMEYGGQGLYEPLDLRIANCKLMTAGAIGAAEPKGRLRVATKFVNVAKRYYAEQGRQVDVIKLYGSMELAPLVGLADKIIDVVDTGNTLRANGLEPQELIATISSRLVVNKASMKMQHARIQALIDTLRDAVEARHRH.

Belongs to the ATP phosphoribosyltransferase family. Short subfamily. Heteromultimer composed of HisG and HisZ subunits.

The protein localises to the cytoplasm. The catalysed reaction is 1-(5-phospho-beta-D-ribosyl)-ATP + diphosphate = 5-phospho-alpha-D-ribose 1-diphosphate + ATP. It participates in amino-acid biosynthesis; L-histidine biosynthesis; L-histidine from 5-phospho-alpha-D-ribose 1-diphosphate: step 1/9. Catalyzes the condensation of ATP and 5-phosphoribose 1-diphosphate to form N'-(5'-phosphoribosyl)-ATP (PR-ATP). Has a crucial role in the pathway because the rate of histidine biosynthesis seems to be controlled primarily by regulation of HisG enzymatic activity. The protein is ATP phosphoribosyltransferase of Pseudomonas paraeruginosa (strain DSM 24068 / PA7) (Pseudomonas aeruginosa (strain PA7)).